Here is a 434-residue protein sequence, read N- to C-terminus: D-amino acid dehydrogenase (434 aa).

3–17 (VLVLGSGVIGTTSAW) is a binding site for FAD.

The protein belongs to the DadA oxidoreductase family. FAD is required as a cofactor.

The enzyme catalyses a D-alpha-amino acid + A + H2O = a 2-oxocarboxylate + AH2 + NH4(+). Its pathway is amino-acid degradation; D-alanine degradation; NH(3) and pyruvate from D-alanine: step 1/1. Functionally, oxidative deamination of D-amino acids. This chain is D-amino acid dehydrogenase, found in Stenotrophomonas maltophilia (strain R551-3).